The chain runs to 272 residues: Acidic leucine-rich nuclear phosphoprotein 32 family member B (272 aa).

4 LRR repeats span residues 18-38 (AVRE…EGLT), 43-64 (NLEF…PKLP), 65-87 (KLKK…AEEL), and 89-110 (SLTH…EPLK). In terms of domain architecture, LRRCT spans 123-161 (CEVTNRSDYRETVFRLLPQLSYLDGYDREDQEAPDSDVE). A compositionally biased stretch (acidic residues) spans 149-254 (DREDQEAPDS…DEDEDEEEEE (106 aa)). The segment at 149 to 272 (DREDQEAPDS…RETDDEGEDD (124 aa)) is disordered. Phosphoserine occurs at positions 164 and 171. Residues 255–265 (SGKGEKRKRET) show a composition bias toward basic and acidic residues. A Nuclear localization signal motif is present at residues 260–263 (KRKR). The residue at position 265 (Thr-265) is a Phosphothreonine.

This sequence belongs to the ANP32 family. Interacts with histones H3 and H4. Interacts with KLF5; this interaction induces promoter region-specific histone incorporation and inhibition of histone acetylation by ANP32B. Some glutamate residues are glycylated by TTLL8. This modification occurs exclusively on glutamate residues and results in a glycine chain on the gamma-carboxyl group. In terms of processing, directly cleaved by caspase-3/CASP3.

The protein localises to the nucleus. Multifunctional protein that is involved in the regulation of many processes including cell proliferation, apoptosis, cell cycle progression or transcription. Regulates the proliferation of neuronal stem cells, differentiation of leukemic cells and progression from G1 to S phase of the cell cycle. As negative regulator of caspase-3-dependent apoptosis, may act as an antagonist of ANP32A in regulating tissue homeostasis. Exhibits histone chaperone properties, able to recruit histones to certain promoters, thus regulating the transcription of specific genes. Also plays an essential role in the nucleocytoplasmic transport of specific mRNAs via the uncommon nuclear mRNA export receptor XPO1/CRM1. Participates in the regulation of adequate adaptive immune responses by acting on mRNA expression and cell proliferation. The chain is Acidic leucine-rich nuclear phosphoprotein 32 family member B (Anp32b) from Mus musculus (Mouse).